We begin with the raw amino-acid sequence, 564 residues long: Zyxin (564 aa).

N-acetylalanine is present on alanine 2. The segment at 30–141 (VAPKPKVNPF…TQLPPQPREK (112 aa)) is disordered. 2 stretches are compositionally biased toward pro residues: residues 63-78 (IPPP…PPPL) and 93-109 (FPPP…PPAP). Residues serine 117, serine 144, serine 170, and serine 171 each carry the phosphoserine modification. The tract at residues 162-344 (NDPFKARVSS…RSPGGPGPLT (183 aa)) is disordered. 2 stretches are compositionally biased toward pro residues: residues 174–189 (VPPP…PSTK) and 197–214 (PLPP…PQPQ). At threonine 180 the chain carries Phosphothreonine. A compositionally biased stretch (polar residues) spans 234–243 (QPVSSANTQP). Position 244 is an asymmetric dimethylarginine (arginine 244). A compositionally biased stretch (low complexity) spans 255–275 (PKFAPVAPKFTPVVSKFSPGA). Residues lysine 256 and lysine 263 each carry the N6-acetyllysine modification. Threonine 265 is subject to Phosphothreonine. An N6-acetyllysine modification is found at lysine 270. Serine 272 and serine 300 each carry phosphoserine. Residues 294–310 (SSVSTGSPQPPSFTYAQ) are compositionally biased toward polar residues. A compositionally biased stretch (basic and acidic residues) spans 311 to 322 (QKEKPLVQEKQH). Serine 336 is subject to Phosphoserine. 3 consecutive LIM zinc-binding domains span residues 376–435 (CGKC…TLEK), 436–495 (CNTC…YAPR), and 496–562 (CSVC…SARA).

This sequence belongs to the zyxin/ajuba family. Interacts, via the Pro-rich regions, with the EVH1 domains of ENAH, EVL and VASP. Interacts with the first LIM domain of TES. Interacts with SYNPO2.

Its subcellular location is the cytoplasm. It is found in the cytoskeleton. It localises to the cell junction. The protein localises to the focal adhesion. The protein resides in the nucleus. In terms of biological role, adhesion plaque protein. Binds alpha-actinin and the CRP protein. Important for targeting TES and ENA/VASP family members to focal adhesions and for the formation of actin-rich structures. May be a component of a signal transduction pathway that mediates adhesion-stimulated changes in gene expression. This is Zyxin (Zyx) from Mus musculus (Mouse).